The primary structure comprises 1638 residues: ATP-dependent helicase brm (1638 aa).

2 disordered regions span residues 1–137 (MASP…SQEN) and 201–387 (QMQQ…GMPM). The span at 7–51 (ANSPMPPPQAPSPMAPPSQSPAPSPHSPYPHQQPGPLQGPPPPGH) shows a compositional bias: pro residues. Residues 52-63 (PGAYGHPMQHGP) are compositionally biased toward low complexity. The segment covering 121–131 (GGPPGGPPPPE) has biased composition (pro residues). The QLQ domain occupies 173-208 (HLNGNQVNLLRTQITAYRLLARNKPISMQMQQALQA). Residues 201 to 211 (QMQQALQAAQQ) are compositionally biased toward low complexity. Composition is skewed to pro residues over residues 212-231 (QPPP…PPPG), 238-253 (PPVP…PSAG), 263-272 (ASNPYGPPVP), and 279-304 (APPP…PPPI). 2 stretches are compositionally biased toward low complexity: residues 305–317 (QQQQ…QQQS) and 365–382 (PGSQ…QVPP). Positions 501–573 (QKLEAERKRR…EKERMRRLMA (73 aa)) constitute an HSA domain. The interval 691 to 730 (DEEDSCGSNDDHKPKVEEQPTATEDATDKAQATGNDEDAK) is disordered. Phosphoserine occurs at positions 695 and 698. Residues 699-708 (NDDHKPKVEE) are compositionally biased toward basic and acidic residues. A compositionally biased stretch (polar residues) spans 710-724 (PTATEDATDKAQATG). Residues 785 to 950 (VSLYNNNLNG…WALLNFLLPS (166 aa)) enclose the Helicase ATP-binding domain. An ATP-binding site is contributed by 798–805 (DEMGLGKT). The DEGH box signature appears at 900-903 (DEGH). The 162-residue stretch at 1102–1263 (LLDRILPKLK…QKSTGSERQQ (162 aa)) folds into the Helicase C-terminal domain. A compositionally biased stretch (acidic residues) spans 1380–1391 (DGAEFDEEEEED). The interval 1380 to 1412 (DGAEFDEEEEEDDSKRKRRKRKNRKEESDDDSL) is disordered. A phosphoserine mark is found at Ser-1407 and Ser-1411. In terms of domain architecture, Bromo spans 1425–1530 (RSKKQMHKIM…KVFVGARQRI (106 aa)). The segment at 1544 to 1578 (NTGEAHGNGGSDNSDNDDDDGGDDGSDDEEIATTS) is disordered. Residues 1557-1574 (SDNDDDDGGDDGSDDEEI) show a composition bias toward acidic residues. Phosphoserine occurs at positions 1591 and 1594. Residues 1592–1604 (LASAPATPTQSSS) show a composition bias toward low complexity. Positions 1592–1638 (LASAPATPTQSSSNVSSGAATTSKKQTRRKRSQKKYTISDDDDDDMD) are disordered. Residues 1616-1625 (KQTRRKRSQK) show a composition bias toward basic residues.

As to quaternary structure, component of the Brahma complex, which is composed of brm, osa, mor, Snr1/Bap45, dalao/Bap111, Bap55, Bap60 and Act42A/Bap47. Interacts with asf1. Associates with the brm-HDAC3-erm repressor complex, composed of brm, HDAC3 and erm. Interacts with erm and HDAC3.

Its subcellular location is the nucleus. The enzyme catalyses ATP + H2O = ADP + phosphate + H(+). Functionally, transcriptional regulator. Acts as a coactivator, assisting one or more dedicated transcriptional activators of ANTC and BXC homeotic gene clusters. Can counteract the repressive effect of Polycomb protein. ATPase subunit of the Brahma complex, a multiprotein complex which is the equivalent of the yeast SWI/SNF complex and acts by remodeling the chromatin by catalyzing an ATP-dependent alteration in the structure of nucleosomal DNA. This complex can both serve as a transcriptional coactivator or corepressor, depending on the context. In type II neuroblast lineage, as part of the Brm remodeling complex, suppresses the formation of ectopic neuroblasts probably through interaction with erm and HDAC3. The chain is ATP-dependent helicase brm (brm) from Drosophila melanogaster (Fruit fly).